The sequence spans 331 residues: 3'-5' exonuclease (331 aa).

Residues 27–92 (ERVKQTNAAK…EDGPASPEKE (66 aa)) form a disordered region. Residues 31-43 (QTNAAKKQIATNN) show a composition bias toward polar residues. Residues 47–67 (KNQDTPEMIKDKENAESENPP) show a composition bias toward basic and acidic residues. Phosphoserine is present on residues serine 80 and serine 88. One can recognise a 3'-5' exonuclease domain in the interval 118 to 290 (SADEVMQWVE…IGQVIYREIE (173 aa)). Residues aspartate 140, glutamate 142, and aspartate 278 each coordinate Mg(2+).

Belongs to the WRNexo family.

It is found in the nucleus. Its function is as follows. Has exonuclease activity on both single-stranded and duplex templates bearing overhangs, but not blunt ended duplex DNA, and cleaves in a 3'-5' direction. Essential for the formation of DNA replication focal centers. Has an important role in maintaining genome stability. The sequence is that of 3'-5' exonuclease from Drosophila grimshawi (Hawaiian fruit fly).